The sequence spans 402 residues: Speedy protein E6 (402 aa).

Residues 1 to 89 (MDRTETRFRK…EEPEKELAPE (89 aa)) form a disordered region. Polar residues predominate over residues 16–39 (GKITTSRQPHPQNEQSPQRSTSGY). The segment covering 76 to 89 (DESEEEPEKELAPE) has biased composition (acidic residues).

The protein belongs to the Speedy/Ringo family.

This chain is Speedy protein E6 (SPDYE6), found in Homo sapiens (Human).